The following is a 1021-amino-acid chain: MGKRTNPRHFLVTWSLLLLETAFGLTSREVNKTLCIEKERDALLEFKRGLNDDFGRLSTWGDEEECCNWKGIECDKRTGHVIVLDLHSEVTCPGHACFAPILTGKVSPSLLELEYLNFLDLSVNGFENSEIPRFIGSLKRLEYLNLSSSDFSGEIPAQFQNLTSLRILDLGNNNLIVKDLVWLSHLSSLEFLRLGGNDFQARNWFREITKVPSLKELDLSVCGLSKFVPSPADVANSSLISLSVLHLCCNEFSTSSEYSWLFNFSTSLTSIDLSHNQLSRQIDDRFGSLMYLEHLNLANNFGAEGGVPSSFGNLTRLHYLDMSNTQTYQWLPELFLRLSGSRKSLEVLGLNDNSLFGSIVNVTRFSSLKKLYLQKNMLNGFFMERVGQVSSLEYLDLSDNQMRGPLPDLALFPSLRELHLGSNQFQGRIPQGIGKLSQLRIFDVSSNRLEGLPESMGQLSNLERFDASYNVLKGTITESHFSNLSSLVDLDLSFNLLSLNTRFDWVPPFQLQFIRLPSCNMGPSFPKWLQTQNNYTLLDISLANISDMLPSWFSNLPPELKILNLSNNHISGRVSEFIVSKQDYMIIDLSSNNFSGHLPLVPANIQIFYLHKNHFSGSISSICRNTIGAATSIDLSRNQFSGEVPDCWMNMSNLAVLNLAYNNFSGKVPQSLGSLTNLEALYIRQNSFRGMLPSFSQCQLLQILDIGGNKLTGRIPAWIGTDLLQLRILSLRSNKFDGSIPSLICQLQFLQILDLSENGLSGKIPQCLNNFTILRQENGSGESMDFKVRYDYIPGSYLYIGDLLIQWKNQESEYKNALLYLKIIDLSSNKLVGGIPKEIAEMRGLRSLNLSRNDLNGTVVEGIGQMKLLESLDLSRNQLSGMIPQGLSNLTFLSVLDLSNNHLSGRIPSSTQLQSFDRSSYSGNAQLCGPPLEECPGYAPPIDRGSNTNPQEHDDDDEFSSLEFYVSMVLGFFVTFWGILGCLIVNRSWRNAYFTFLTDMKSWLHMTSRVCFARLKGKLRN.

The N-terminal stretch at 1–24 (MGKRTNPRHFLVTWSLLLLETAFG) is a signal peptide. Residues 25 to 109 (LTSREVNKTL…PILTGKVSPS (85 aa)) form an N-cap region. Topologically, residues 25 to 963 (LTSREVNKTL…DDDDEFSSLE (939 aa)) are extracellular. Asn31 carries N-linked (GlcNAc...) asparagine glycosylation. LRR repeat units follow at residues 113-136 (LEYL…RFIG), 138-161 (LKRL…QFQN), 162-184 (LTSL…VWLS), 186-211 (LSSL…ITKV), 214-237 (LKEL…VANS), and 239-262 (LISL…SWLF). Asn145 and Asn161 each carry an N-linked (GlcNAc...) asparagine glycan. N-linked (GlcNAc...) asparagine glycosylation occurs at Asn236. Asn263 carries N-linked (GlcNAc...) asparagine glycosylation. LRR repeat units lie at residues 265–288 (STSL…RFGS), 290–313 (MYLE…SFGN), 314–337 (LTRL…LFLR), 342–365 (RKSL…VTRF), 366–388 (SSLK…RVGQ), 389–412 (VSSL…LALF), 413–436 (PSLR…IGKL), 437–459 (SQLR…MGQL), 461–483 (NLER…HFSN), 484–507 (LSSL…DWVP), 509–532 (FQLQ…LQTQ), 533–555 (NNYT…WFSN), 557–581 (PPEL…IVSK), and 583–607 (DYMI…NIQI). N-linked (GlcNAc...) asparagine glycosylation is present at Asn313. Asn483 carries N-linked (GlcNAc...) asparagine glycosylation. Residues Asn534, Asn544, Asn564, and Asn593 are each glycosylated (N-linked (GlcNAc...) asparagine). Residues 608 to 626 (FYLHKNHFSGSISSICRNT) form an LRR 21; degenerate repeat. LRR repeat units follow at residues 627 to 651 (IGAA…WMNM), 652 to 675 (SNLA…LGSL), 677 to 698 (NLEA…FSQC), 699 to 722 (QLLQ…IGTD), 723 to 747 (LLQL…ICQL), and 749 to 773 (FLQI…NFTI). N-linked (GlcNAc...) asparagine glycosylation is found at Asn650 and Asn663. Residues Asn770 and Asn778 are each glycosylated (N-linked (GlcNAc...) asparagine). LRR repeat units lie at residues 818–842 (LLYL…IAEM), 843–866 (RGLR…IGQM), 867–890 (KLLE…LSNL), and 892–913 (FLSV…STQL). 3 N-linked (GlcNAc...) asparagine glycosylation sites follow: Asn849, Asn856, and Asn889. The C-cap/acidic domain stretch occupies residues 914–963 (QSFDRSSYSGNAQLCGPPLEECPGYAPPIDRGSNTNPQEHDDDDEFSSLE). The chain crosses the membrane as a helical span at residues 964-984 (FYVSMVLGFFVTFWGILGCLI). Over 985–1021 (VNRSWRNAYFTFLTDMKSWLHMTSRVCFARLKGKLRN) the chain is Cytoplasmic.

The protein belongs to the RLP family. In terms of assembly, interacts with EIX elicitor protein.

It is found in the cell membrane. In terms of biological role, involved in plant defense. Confers resistance to the fungal pathogen T.viride through recognition of the EIX elicitor protein. This chain is Receptor-like protein EIX2, found in Solanum lycopersicum (Tomato).